The chain runs to 379 residues: Lipoyl synthase 1, mitochondrial (379 aa).

C106, C111, C117, C137, C141, C144, and S352 together coordinate [4Fe-4S] cluster. The region spanning 122-341 is the Radical SAM core domain; sequence EHGTQTATIM…EERGNELGFL (220 aa).

Belongs to the radical SAM superfamily. Lipoyl synthase family. [4Fe-4S] cluster serves as cofactor.

The protein localises to the mitochondrion. It catalyses the reaction [[Fe-S] cluster scaffold protein carrying a second [4Fe-4S](2+) cluster] + N(6)-octanoyl-L-lysyl-[protein] + 2 oxidized [2Fe-2S]-[ferredoxin] + 2 S-adenosyl-L-methionine + 4 H(+) = [[Fe-S] cluster scaffold protein] + N(6)-[(R)-dihydrolipoyl]-L-lysyl-[protein] + 4 Fe(3+) + 2 hydrogen sulfide + 2 5'-deoxyadenosine + 2 L-methionine + 2 reduced [2Fe-2S]-[ferredoxin]. Its pathway is protein modification; protein lipoylation via endogenous pathway; protein N(6)-(lipoyl)lysine from octanoyl-[acyl-carrier-protein]: step 2/2. In terms of biological role, catalyzes the radical-mediated insertion of two sulfur atoms into the C-6 and C-8 positions of the octanoyl moiety bound to the lipoyl domains of lipoate-dependent enzymes, thereby converting the octanoylated domains into lipoylated derivatives. This is Lipoyl synthase 1, mitochondrial from Drosophila yakuba (Fruit fly).